The following is a 270-amino-acid chain: Thiazole synthase (270 aa).

Lys112 functions as the Schiff-base intermediate with DXP in the catalytic mechanism. Residues Gly173, 199-200, and 221-222 each bind 1-deoxy-D-xylulose 5-phosphate; these read AG and NS.

The protein belongs to the ThiG family. Homotetramer. Forms heterodimers with either ThiH or ThiS.

It localises to the cytoplasm. It carries out the reaction [ThiS sulfur-carrier protein]-C-terminal-Gly-aminoethanethioate + 2-iminoacetate + 1-deoxy-D-xylulose 5-phosphate = [ThiS sulfur-carrier protein]-C-terminal Gly-Gly + 2-[(2R,5Z)-2-carboxy-4-methylthiazol-5(2H)-ylidene]ethyl phosphate + 2 H2O + H(+). Its pathway is cofactor biosynthesis; thiamine diphosphate biosynthesis. Catalyzes the rearrangement of 1-deoxy-D-xylulose 5-phosphate (DXP) to produce the thiazole phosphate moiety of thiamine. Sulfur is provided by the thiocarboxylate moiety of the carrier protein ThiS. In vitro, sulfur can be provided by H(2)S. The sequence is that of Thiazole synthase from Pseudomonas putida (strain ATCC 700007 / DSM 6899 / JCM 31910 / BCRC 17059 / LMG 24140 / F1).